The sequence spans 443 residues: Thymidine phosphorylase (443 aa).

The protein belongs to the thymidine/pyrimidine-nucleoside phosphorylase family. As to quaternary structure, homodimer.

The catalysed reaction is thymidine + phosphate = 2-deoxy-alpha-D-ribose 1-phosphate + thymine. The protein operates within pyrimidine metabolism; dTMP biosynthesis via salvage pathway; dTMP from thymine: step 1/2. Its function is as follows. The enzymes which catalyze the reversible phosphorolysis of pyrimidine nucleosides are involved in the degradation of these compounds and in their utilization as carbon and energy sources, or in the rescue of pyrimidine bases for nucleotide synthesis. In Shewanella halifaxensis (strain HAW-EB4), this protein is Thymidine phosphorylase.